Reading from the N-terminus, the 614-residue chain is Spastin (614 aa).

Positions 1–45 (MNSPGGRGKKKGSGGPSSPVPPRPPPPCQARSRPAPKPAPPPQSP) are disordered. The required for nuclear localization stretch occupies residues 1–50 (MNSPGGRGKKKGSGGPSSPVPPRPPPPCQARSRPAPKPAPPPQSPHKRNL). The Cytoplasmic segment spans residues 1 to 56 (MNSPGGRGKKKGSGGPSSPVPPRPPPPCQARSRPAPKPAPPPQSPHKRNLYYFSYP). The segment at 1 to 80 (MNSPGGRGKK…LGLLFVWLCQ (80 aa)) is required for interaction with ATL1. Positions 1-192 (MNSPGGRGKK…LVMAKDRLQL (192 aa)) are required for midbody localization. Residues 1-298 (MNSPGGRGKK…STPKTNRTNK (298 aa)) form a required for interaction with RTN1 region. The short motif at 4-11 (PGGRGKKK) is the Nuclear localization signal element. 2 stretches are compositionally biased toward pro residues: residues 18-28 (SPVPPRPPPPC) and 35-44 (APKPAPPPQS). The segment at 50–87 (LYYFSYPLFLGFALLRLVAFHLGLLFVWLCQRFSRALM) is required for interaction with SSNA1 and microtubules. The segment at residues 57 to 77 (LFLGFALLRLVAFHLGLLFVW) is an intramembrane region (helical). Residues 59–67 (LGFALLRLV) carry the Nuclear export signal motif. At 78 to 614 (LCQRFSRALM…WNKDFGDTTV (537 aa)) the chain is on the cytoplasmic side. The segment at 110 to 194 (EAERVRAFHK…MAKDRLQLLE (85 aa)) is sufficient for interaction with CHMP1B. The segment at 112–198 (ERVRAFHKQA…RLQLLEKLQP (87 aa)) is required for interaction with microtubules. The 76-residue stretch at 118 to 193 (HKQAFEYISV…VMAKDRLQLL (76 aa)) folds into the MIT domain. Residues 220-310 (NGHLQSESGA…TPTTAARKKK (91 aa)) form a disordered region. Residues 226 to 614 (ESGAVPKRKD…WNKDFGDTTV (389 aa)) are sufficient for microtubule severing. 2 positions are modified to phosphoserine: Ser243 and Ser266. Residues 268–326 (SGLSMVSGVRQGPGSAAATHKSTPKTNRTNKPSTPTTAARKKKDLKNFRNVDSNLANLI) form a required for interaction with microtubules and microtubule severing region. Positions 287 to 304 (HKSTPKTNRTNKPSTPTT) are enriched in polar residues. At Thr304 the chain carries Phosphothreonine. A Nuclear localization signal motif is present at residues 307–310 (RKKK). 380-387 (GPPGNGKT) is a binding site for ATP. Phosphoserine is present on Ser595.

The protein belongs to the AAA ATPase family. Spastin subfamily. Homohexamer. Mostly monomeric, but assembles into hexameric structure for short periods of time. Oligomerization seems to be a prerequisite for catalytic activity. Binding to ATP in a cleft between two adjacent subunits stabilizes the homohexameric form. Binds to microtubules at least in part via the alpha-tubulin and beta-tubulin tails. The hexamer adopts a ring conformation through which microtubules pass prior to being severed. Does not interact strongly with tubulin heterodimers. Interacts (via MIT domain) with CHMP1B; the interaction is direct. Interacts with SSNA1. Interacts with ATL1. Interacts with RTN1. Interacts with ZFYVE27. Interacts with REEP1. Interacts (via MIT domain) with IST1.

The protein localises to the membrane. It is found in the endoplasmic reticulum. The protein resides in the midbody. It localises to the cytoplasm. Its subcellular location is the cytoskeleton. The protein localises to the microtubule organizing center. It is found in the centrosome. The protein resides in the perinuclear region. It localises to the nucleus. Its subcellular location is the spindle. The protein localises to the cell projection. It is found in the axon. It carries out the reaction n ATP + n H2O + a microtubule = n ADP + n phosphate + (n+1) alpha/beta tubulin heterodimers.. With respect to regulation, allosteric enzyme with a cooperative mechanism; at least two neighbor subunits influence each other strongly in spastin hexamers. Microtubule binding promotes cooperative interactions among spastin subunits. Functionally, ATP-dependent microtubule severing protein that specifically recognizes and cuts microtubules that are polyglutamylated. Preferentially recognizes and acts on microtubules decorated with short polyglutamate tails: severing activity increases as the number of glutamates per tubulin rises from one to eight, but decreases beyond this glutamylation threshold. Severing activity is not dependent on tubulin acetylation or detyrosination. Microtubule severing promotes reorganization of cellular microtubule arrays and the release of microtubules from the centrosome following nucleation. It is critical for the biogenesis and maintenance of complex microtubule arrays in axons, spindles and cilia. SPAST is involved in abscission step of cytokinesis and nuclear envelope reassembly during anaphase in cooperation with the ESCRT-III complex. Recruited at the midbody, probably by IST1, and participates in membrane fission during abscission together with the ESCRT-III complex. Recruited to the nuclear membrane by IST1 and mediates microtubule severing, promoting nuclear envelope sealing and mitotic spindle disassembly during late anaphase. Required for membrane traffic from the endoplasmic reticulum (ER) to the Golgi and endosome recycling. Recruited by IST1 to endosomes and regulates early endosomal tubulation and recycling by mediating microtubule severing. Probably plays a role in axon growth and the formation of axonal branches. This Bos taurus (Bovine) protein is Spastin.